Consider the following 65-residue polypeptide: Toxin AaHIT4 (65 aa).

The region spanning 1–64 (EHGYLLNKYT…LWNYKTNKCD (64 aa)) is the LCN-type CS-alpha/beta domain. Cystine bridges form between C12-C63, C16-C38, C23-C45, and C27-C47.

Belongs to the long (4 C-C) scorpion toxin superfamily. Sodium channel inhibitor family. Expressed by the venom gland.

The protein localises to the secreted. Its function is as follows. Has a toxic effect on insects and mammals and is capable of competing with anti-insect scorpion toxins for binding to the sodium channel (Nav) of insects. It also modulates the binding of alpha-type and beta-type anti-mammal scorpion toxins to the mammal sodium channel. It may act on both site 3 and site 4 of voltage-gated sodium channels. The sequence is that of Toxin AaHIT4 from Androctonus australis (Sahara scorpion).